A 275-amino-acid polypeptide reads, in one-letter code: Small ribosomal subunit protein uS2 (275 aa).

Positions 232-256 (ARATDGKPEPEPVPGQELGADEPLA) are disordered.

It belongs to the universal ribosomal protein uS2 family.

This is Small ribosomal subunit protein uS2 from Acidothermus cellulolyticus (strain ATCC 43068 / DSM 8971 / 11B).